Reading from the N-terminus, the 334-residue chain is HTH-type transcriptional repressor PurR (334 aa).

Residues 2–56 (ATIKDVAKMAGVSTTTVSHVINKTRFVAAETEKLVLQAIQELNYSPSAVARSLKV) enclose the HTH lacI-type domain. The H-T-H motif DNA-binding region spans 4–23 (IKDVAKMAGVSTTTVSHVIN). The DNA-binding element occupies 48-56 (SAVARSLKV). Hypoxanthine-binding residues include tyrosine 73, lysine 189, threonine 191, phenylalanine 220, and aspartate 274.

As to quaternary structure, homodimer.

It functions in the pathway purine metabolism; purine nucleotide biosynthesis [regulation]. Is the main repressor of the genes involved in the de novo synthesis of purine nucleotides, regulating purB, purC, purEK, purF, purHD, purL, purMN and guaBA expression. PurR is allosterically activated to bind its cognate DNA by binding the purine corepressors, hypoxanthine or guanine, thereby effecting transcription repression. The sequence is that of HTH-type transcriptional repressor PurR from Pasteurella multocida (strain Pm70).